The chain runs to 226 residues: Enolase-phosphatase E1 (226 aa).

Belongs to the HAD-like hydrolase superfamily. MasA/MtnC family. Monomer. It depends on Mg(2+) as a cofactor.

It catalyses the reaction 5-methylsulfanyl-2,3-dioxopentyl phosphate + H2O = 1,2-dihydroxy-5-(methylsulfanyl)pent-1-en-3-one + phosphate. It functions in the pathway amino-acid biosynthesis; L-methionine biosynthesis via salvage pathway; L-methionine from S-methyl-5-thio-alpha-D-ribose 1-phosphate: step 3/6. It participates in amino-acid biosynthesis; L-methionine biosynthesis via salvage pathway; L-methionine from S-methyl-5-thio-alpha-D-ribose 1-phosphate: step 4/6. Functionally, bifunctional enzyme that catalyzes the enolization of 2,3-diketo-5-methylthiopentyl-1-phosphate (DK-MTP-1-P) into the intermediate 2-hydroxy-3-keto-5-methylthiopentenyl-1-phosphate (HK-MTPenyl-1-P), which is then dephosphorylated to form the acireductone 1,2-dihydroxy-3-keto-5-methylthiopentene (DHK-MTPene). This Alcanivorax borkumensis (strain ATCC 700651 / DSM 11573 / NCIMB 13689 / SK2) protein is Enolase-phosphatase E1.